The chain runs to 31 residues: Photosystem II reaction center protein T (31 aa).

A helical membrane pass occupies residues 3–23 (ALVYTFLLVGTLGIIFFAIFF).

The protein belongs to the PsbT family. As to quaternary structure, PSII is composed of 1 copy each of membrane proteins PsbA, PsbB, PsbC, PsbD, PsbE, PsbF, PsbH, PsbI, PsbJ, PsbK, PsbL, PsbM, PsbT, PsbY, PsbZ, Psb30/Ycf12, at least 3 peripheral proteins of the oxygen-evolving complex and a large number of cofactors. It forms dimeric complexes.

The protein localises to the plastid. Its subcellular location is the chloroplast thylakoid membrane. Found at the monomer-monomer interface of the photosystem II (PS II) dimer, plays a role in assembly and dimerization of PSII. PSII is a light-driven water plastoquinone oxidoreductase, using light energy to abstract electrons from H(2)O, generating a proton gradient subsequently used for ATP formation. In Chlorella vulgaris (Green alga), this protein is Photosystem II reaction center protein T.